We begin with the raw amino-acid sequence, 213 residues long: Orotate phosphoribosyltransferase (213 aa).

K26 provides a ligand contact to 5-phospho-alpha-D-ribose 1-diphosphate. 34–35 is a binding site for orotate; the sequence is FF. 5-phospho-alpha-D-ribose 1-diphosphate is bound by residues 72 to 73, R99, K100, K103, H105, and 124 to 132; these read YK and DDVITAGTA. 2 residues coordinate orotate: T128 and R156.

Belongs to the purine/pyrimidine phosphoribosyltransferase family. PyrE subfamily. As to quaternary structure, homodimer. Requires Mg(2+) as cofactor.

The catalysed reaction is orotidine 5'-phosphate + diphosphate = orotate + 5-phospho-alpha-D-ribose 1-diphosphate. It functions in the pathway pyrimidine metabolism; UMP biosynthesis via de novo pathway; UMP from orotate: step 1/2. Its function is as follows. Catalyzes the transfer of a ribosyl phosphate group from 5-phosphoribose 1-diphosphate to orotate, leading to the formation of orotidine monophosphate (OMP). This chain is Orotate phosphoribosyltransferase, found in Photorhabdus laumondii subsp. laumondii (strain DSM 15139 / CIP 105565 / TT01) (Photorhabdus luminescens subsp. laumondii).